We begin with the raw amino-acid sequence, 170 residues long: MDLKKYVTIVPDYPKEGVQFKDITTLMDKGDVYRYATDQIVEYAKEKEIDLVVGPEARGFIIGCPVAYALGVGFAPVRKEGKLPREVIKVDYGLEYGKDVLTIHKDAILPGQRVLITDDLLATGGTIEATIKLVEELGGVVAGIAFLIELSYLDGRDKLDDYDILTLMKY.

It belongs to the purine/pyrimidine phosphoribosyltransferase family. As to quaternary structure, homodimer.

Its subcellular location is the cytoplasm. The enzyme catalyses AMP + diphosphate = 5-phospho-alpha-D-ribose 1-diphosphate + adenine. It functions in the pathway purine metabolism; AMP biosynthesis via salvage pathway; AMP from adenine: step 1/1. In terms of biological role, catalyzes a salvage reaction resulting in the formation of AMP, that is energically less costly than de novo synthesis. In Bacillus velezensis (strain DSM 23117 / BGSC 10A6 / LMG 26770 / FZB42) (Bacillus amyloliquefaciens subsp. plantarum), this protein is Adenine phosphoribosyltransferase.